The chain runs to 237 residues: Phosphoribosylaminoimidazole-succinocarboxamide synthase (237 aa).

Belongs to the SAICAR synthetase family.

It catalyses the reaction 5-amino-1-(5-phospho-D-ribosyl)imidazole-4-carboxylate + L-aspartate + ATP = (2S)-2-[5-amino-1-(5-phospho-beta-D-ribosyl)imidazole-4-carboxamido]succinate + ADP + phosphate + 2 H(+). It functions in the pathway purine metabolism; IMP biosynthesis via de novo pathway; 5-amino-1-(5-phospho-D-ribosyl)imidazole-4-carboxamide from 5-amino-1-(5-phospho-D-ribosyl)imidazole-4-carboxylate: step 1/2. The protein is Phosphoribosylaminoimidazole-succinocarboxamide synthase of Listeria welshimeri serovar 6b (strain ATCC 35897 / DSM 20650 / CCUG 15529 / CIP 8149 / NCTC 11857 / SLCC 5334 / V8).